The sequence spans 143 residues: Granulocyte-macrophage colony-stimulating factor (143 aa).

A signal peptide spans 1–17 (MWLQNLLLLGTVVCSFS). An O-linked (GalNAc...) threonine glycan is attached at Thr27. 2 N-linked (GlcNAc...) asparagine glycosylation sites follow: Asn44 and Asn54. 2 cysteine pairs are disulfide-bonded: Cys70/Cys112 and Cys104/Cys137.

Belongs to the GM-CSF family. In terms of assembly, monomer. The signaling GM-CSF receptor complex is a dodecamer of two head-to-head hexamers of two alpha, two beta, and two ligand subunits.

It is found in the secreted. Its function is as follows. Cytokine that stimulates the growth and differentiation of hematopoietic precursor cells from various lineages, including granulocytes, macrophages, eosinophils and erythrocytes. In Bos taurus (Bovine), this protein is Granulocyte-macrophage colony-stimulating factor (CSF2).